The primary structure comprises 902 residues: Respiratory nitrate reductase alpha chain (902 aa).

[4Fe-4S] cluster-binding residues include His29, Cys33, and Cys37.

Belongs to the prokaryotic molybdopterin-containing oxidoreductase family. As to quaternary structure, heterotrimer composed of an alpha, a beta and a gamma chain. Alpha and beta are catalytic chains; gamma chains are involved in binding the enzyme complex to the cytoplasmic membrane. [4Fe-4S] cluster is required as a cofactor. It depends on Mo-bis(molybdopterin guanine dinucleotide) as a cofactor.

It localises to the cell membrane. The protein resides in the cytoplasm. The enzyme catalyses nitrate + a quinol = a quinone + nitrite + H2O. Inhibited by micromolar concentrations of azide. Its function is as follows. The nitrate reductase enzyme complex allows Bradyrhizobium sp. USDA 3045 to use nitrate as an electron acceptor during anaerobic growth. The alpha chain is the actual site of nitrate reduction. The protein is Respiratory nitrate reductase alpha chain (narG) of Bradyrhizobium sp.